The following is a 361-amino-acid chain: Chorismate synthase (361 aa).

NADP(+)-binding residues include R48 and R54. FMN-binding positions include 125 to 127, 238 to 239, G278, 293 to 297, and R319; these read RSS, NA, and KPTSS.

Belongs to the chorismate synthase family. As to quaternary structure, homotetramer. FMNH2 serves as cofactor.

The catalysed reaction is 5-O-(1-carboxyvinyl)-3-phosphoshikimate = chorismate + phosphate. It functions in the pathway metabolic intermediate biosynthesis; chorismate biosynthesis; chorismate from D-erythrose 4-phosphate and phosphoenolpyruvate: step 7/7. Functionally, catalyzes the anti-1,4-elimination of the C-3 phosphate and the C-6 proR hydrogen from 5-enolpyruvylshikimate-3-phosphate (EPSP) to yield chorismate, which is the branch point compound that serves as the starting substrate for the three terminal pathways of aromatic amino acid biosynthesis. This reaction introduces a second double bond into the aromatic ring system. In Yersinia pseudotuberculosis serotype IB (strain PB1/+), this protein is Chorismate synthase.